We begin with the raw amino-acid sequence, 185 residues long: Elongation factor P (185 aa).

It belongs to the elongation factor P family.

The protein resides in the cytoplasm. It participates in protein biosynthesis; polypeptide chain elongation. In terms of biological role, involved in peptide bond synthesis. Stimulates efficient translation and peptide-bond synthesis on native or reconstituted 70S ribosomes in vitro. Probably functions indirectly by altering the affinity of the ribosome for aminoacyl-tRNA, thus increasing their reactivity as acceptors for peptidyl transferase. The chain is Elongation factor P from Alkaliphilus metalliredigens (strain QYMF).